A 495-amino-acid chain; its full sequence is Cobyric acid synthase (495 aa).

The GATase cobBQ-type domain maps to 256-444; that stretch reads KVNVAVVLLR…VHGILDNPSV (189 aa). Cys337 functions as the Nucleophile in the catalytic mechanism. His436 is a catalytic residue.

Belongs to the CobB/CobQ family. CobQ subfamily.

The protein operates within cofactor biosynthesis; adenosylcobalamin biosynthesis. Functionally, catalyzes amidations at positions B, D, E, and G on adenosylcobyrinic A,C-diamide. NH(2) groups are provided by glutamine, and one molecule of ATP is hydrogenolyzed for each amidation. This is Cobyric acid synthase from Bacteroides fragilis (strain ATCC 25285 / DSM 2151 / CCUG 4856 / JCM 11019 / LMG 10263 / NCTC 9343 / Onslow / VPI 2553 / EN-2).